A 907-amino-acid chain; its full sequence is Putative pentatricopeptide repeat-containing protein At5g59900 (907 aa).

PPR repeat units follow at residues 103–137, 155–185, 191–225, 226–260, 261–295, 296–330, 331–365, 366–400, 401–435, 436–470, 471–505, 506–540, 541–575, 576–610, 611–645, 646–680, 681–715, 716–750, 751–782, 786–820, 821–855, and 856–890; these read STASFCILIHALVKANLFWPASSLLQTLLLRALKP, SSSSFDLLIQHYVRSRRVLDGVLVFKMMITK, EVRTLSALLHGLVKFRHFGLAMELFNDMVSVGIRP, DVYIYTGVIRSLCELKDLSRAKEMIAHMEATGCDV, NIVPYNVLIDGLCKKQKVWEAVGIKKDLAGKDLKP, DVVTYCTLVYGLCKVQEFEIGLEMMDEMLCLRFSP, SEAAVSSLVEGLRKRGKIEEALNLVKRVVDFGVSP, NLFVYNALIDSLCKGRKFHEAELLFDRMGKIGLRP, NDVTYSILIDMFCRRGKLDTALSFLGEMVDTGLKL, SVYPYNSLINGHCKFGDISAAEGFMAEMINKKLEP, TVVTYTSLMGGYCSKGKINKALRLYHEMTGKGIAP, SIYTFTTLLSGLFRAGLIRDAVKLFNEMAEWNVKP, NRVTYNVMIEGYCEEGDMSKAFEFLKEMTEKGIVP, DTYSYRPLIHGLCLTGQASEAKVFVDGLHKGNCEL, NEICYTGLLHGFCREGKLEEALSVCQEMVQRGVDL, DLVCYGVLIDGSLKHKDRKLFFGLLKEMHDRGLKP, DDVIYTSMIDAKSKTGDFKEAFGIWDLMINEGCVP, NEVTYTAVINGLCKAGFVNEAEVLCSKMQPVSSVP, NQVTYGCFLDILTKGEVDMQKAVELHNAILKG, NTATYNMLIRGFCRQGRIEEASELITRMIGDGVSP, DCITYTTMINELCRRNDVKKAIELWNSMTEKGIRP, and DRVAYNTLIHGCCVAGEMGKATELRNEMLRQGLIP. Positions 887–907 are disordered; sequence GLIPNNKTSRTTTSNDTSSKS. Residues 891 to 907 are compositionally biased toward low complexity; that stretch reads NNKTSRTTTSNDTSSKS.

Belongs to the PPR family. P subfamily.

This is Putative pentatricopeptide repeat-containing protein At5g59900 from Arabidopsis thaliana (Mouse-ear cress).